The primary structure comprises 188 residues: Putative pre-16S rRNA nuclease (188 aa).

A disordered region spans residues 156-188; sequence LRQGDAAPGGSDDERDEDGDTDGEDGGGDGGGE. Residues 166–188 show a composition bias toward acidic residues; that stretch reads SDDERDEDGDTDGEDGGGDGGGE.

This sequence belongs to the YqgF nuclease family.

It is found in the cytoplasm. Could be a nuclease involved in processing of the 5'-end of pre-16S rRNA. In Rhodospirillum centenum (strain ATCC 51521 / SW), this protein is Putative pre-16S rRNA nuclease.